An 87-amino-acid chain; its full sequence is Small ribosomal subunit protein bS20 (87 aa).

It belongs to the bacterial ribosomal protein bS20 family.

Its function is as follows. Binds directly to 16S ribosomal RNA. The chain is Small ribosomal subunit protein bS20 from Halothermothrix orenii (strain H 168 / OCM 544 / DSM 9562).